The chain runs to 272 residues: 3-methyl-2-oxobutanoate hydroxymethyltransferase (272 aa).

Residues Asp-51 and Asp-90 each contribute to the Mg(2+) site. 3-methyl-2-oxobutanoate-binding positions include 51 to 52 (DS), Asp-90, and Lys-118. Glu-120 provides a ligand contact to Mg(2+). The active-site Proton acceptor is Glu-187.

The protein belongs to the PanB family. Homodecamer; pentamer of dimers. Requires Mg(2+) as cofactor.

Its subcellular location is the cytoplasm. The enzyme catalyses 3-methyl-2-oxobutanoate + (6R)-5,10-methylene-5,6,7,8-tetrahydrofolate + H2O = 2-dehydropantoate + (6S)-5,6,7,8-tetrahydrofolate. It participates in cofactor biosynthesis; (R)-pantothenate biosynthesis; (R)-pantoate from 3-methyl-2-oxobutanoate: step 1/2. Catalyzes the reversible reaction in which hydroxymethyl group from 5,10-methylenetetrahydrofolate is transferred onto alpha-ketoisovalerate to form ketopantoate. In Xylella fastidiosa (strain M23), this protein is 3-methyl-2-oxobutanoate hydroxymethyltransferase.